Reading from the N-terminus, the 897-residue chain is Cytokine receptor common subunit beta (897 aa).

The first 16 residues, 1–16, serve as a signal peptide directing secretion; the sequence is MVLAQGLLSMALLALC. Topologically, residues 17-443 are extracellular; that stretch reads WERSLAGAEE…WDTESVLPMW (427 aa). Cysteines 35 and 45 form a disulfide. N-linked (GlcNAc...) asparagine glycosylation occurs at Asn58. 2 disulfides stabilise this stretch: Cys75–Cys96 and Cys86–Cys91. In terms of domain architecture, Fibronectin type-III 1 spans 133–240; sequence PPEPRDLQIS…PEVCWDSQPG (108 aa). A glycan (N-linked (GlcNAc...) asparagine) is linked at Asn191. 2 cysteine pairs are disulfide-bonded: Cys250/Cys260 and Cys289/Cys306. Residues 339–436 enclose the Fibronectin type-III 2 domain; the sequence is QMAPPSLNVT…EWSEARSWDT (98 aa). Asn346 carries N-linked (GlcNAc...) asparagine glycosylation. Positions 425–429 match the WSXWS motif motif; sequence WSEWS. A helical membrane pass occupies residues 444–460; that stretch reads VLALIVIFLTIAVLLAL. Residues 461–897 are Cytoplasmic-facing; the sequence is RFCGIYGYRL…WEVNKPGEVC (437 aa). The Box 1 motif signature appears at 474-482; sequence WEEKIPNPS. Disordered stretches follow at residues 498–517, 532–630, 648–812, and 830–849; these read GSMS…WGSR, SEVS…EYLC, PGQA…QPEG, and PGPL…PEIK. The segment covering 564–574 has biased composition (pro residues); sequence EQPPSPQPGPP. Residues 723-752 are compositionally biased toward low complexity; it reads SGASSVSLVPSLGLPSDQTPSLCPGLASGP. Tyr766 carries the phosphotyrosine modification. Residues 830–840 are compositionally biased toward low complexity; sequence PGPLSLRSKPS.

It belongs to the type I cytokine receptor family. Type 4 subfamily. In terms of assembly, heterodimer of an alpha and a beta subunit. The beta subunit is common to the IL3, IL5 and GM-CSF receptors. The signaling GM-CSF receptor complex is a dodecamer of two head-to-head hexamers of two alpha, two beta, and two ligand subunits. Interacts with TMEM102; this interaction occurs preferentially in the absence of CSF2. Interacts with FCER1G; this interaction is direct. Interacts with LYN. Interacts with JAK1. In terms of processing, may be phosphorylated by LYN.

It is found in the membrane. Its function is as follows. Cell surface receptor that plays a role in immune response and controls the production and differentiation of hematopoietic progenitor cells into lineage-restricted cells. Acts by forming an heterodimeric receptor through interaction with different partners such as IL3RA, IL5RA or CSF2RA. In turn, participates in various signaling pathways including interleukin-3, interleukin-5 and granulocyte-macrophage colony-stimulating factor/CSF2 pathways. In unstimulated conditions, interacts constitutively with JAK1 and ligand binding leads to JAK1 stimulation and subsequent activation of the JAK-STAT pathway. In Homo sapiens (Human), this protein is Cytokine receptor common subunit beta (CSF2RB).